The sequence spans 844 residues: Translation initiation factor IF-2 (844 aa).

The segment covering 1 to 11 (MTEDVKADVPK) has biased composition (basic and acidic residues). 2 disordered regions span residues 1-35 (MTED…SKAV) and 79-248 (RLEA…KGAA). Over residues 21-33 (TTVSGTTTSGKSK) the composition is skewed to low complexity. Basic and acidic residues predominate over residues 79-161 (RLEAEKAATK…AAEEAKRYAE (83 aa)). Residues 162 to 175 (ADDSDNESSSEDYS) show a composition bias toward acidic residues. The segment covering 200-210 (RGKNKVAKAKK) has biased composition (basic residues). Over residues 211–237 (GGRDDENSKNSKNERESNRKNQKDAKF) the composition is skewed to basic and acidic residues. The 171-residue stretch at 343–513 (TRAPVVTIMG…LLQSEVLELT (171 aa)) folds into the tr-type G domain. A G1 region spans residues 352 to 359 (GHVDHGKT). 352 to 359 (GHVDHGKT) provides a ligand contact to GTP. Residues 377–381 (GITQH) form a G2 region. Positions 399 to 402 (DTPG) are G3. GTP is bound by residues 399–403 (DTPGH) and 453–456 (NKID). Positions 453-456 (NKID) are G4. A G5 region spans residues 489–491 (SAK).

The protein belongs to the TRAFAC class translation factor GTPase superfamily. Classic translation factor GTPase family. IF-2 subfamily.

The protein localises to the cytoplasm. One of the essential components for the initiation of protein synthesis. Protects formylmethionyl-tRNA from spontaneous hydrolysis and promotes its binding to the 30S ribosomal subunits. Also involved in the hydrolysis of GTP during the formation of the 70S ribosomal complex. This chain is Translation initiation factor IF-2, found in Haemophilus influenzae (strain PittGG).